The primary structure comprises 212 residues: Tetraspanin-31-A (212 aa).

The Cytoplasmic portion of the chain corresponds to 1–12 (MVCGGFTCSKNA). A helical membrane pass occupies residues 13 to 33 (LCALNVVYMLVGLLLIGVAAW). Over 34-44 (GKGFGIVSSIH) the chain is Extracellular. A helical transmembrane segment spans residues 45 to 65 (IIGGVIAIGVFLLLIAIIGLI). Residues 66–72 (GAVSHHQ) lie on the Cytoplasmic side of the membrane. A helical membrane pass occupies residues 73–93 (VMLFIYMVVLILVFIFQFIVS). At 94 to 175 (CSCLAMNRSQ…MLNHADEALK (82 aa)) the chain is on the extracellular side. 4 N-linked (GlcNAc...) asparagine glycosylation sites follow: N100, N109, N117, and N134. The chain crosses the membrane as a helical span at residues 176–196 (ILGGVGLFFSFTEILGVWLAF). Residues 197–212 (RFRNQKDPRANPSAFL) are Cytoplasmic-facing.

It belongs to the tetraspanin (TM4SF) family.

Its subcellular location is the membrane. The sequence is that of Tetraspanin-31-A (tspan31-a) from Xenopus laevis (African clawed frog).